The following is a 151-amino-acid chain: Large ribosomal subunit protein bL9 (151 aa).

Belongs to the bacterial ribosomal protein bL9 family.

Functionally, binds to the 23S rRNA. This is Large ribosomal subunit protein bL9 from Mycolicibacterium gilvum (strain PYR-GCK) (Mycobacterium gilvum (strain PYR-GCK)).